The chain runs to 569 residues: Sulfite reductase [NADPH] hemoprotein beta-component (569 aa).

Cysteine 433, cysteine 439, cysteine 478, and cysteine 482 together coordinate [4Fe-4S] cluster. Cysteine 482 provides a ligand contact to siroheme.

It belongs to the nitrite and sulfite reductase 4Fe-4S domain family. Alpha(8)-beta(8). The alpha component is a flavoprotein, the beta component is a hemoprotein. Siroheme serves as cofactor. Requires [4Fe-4S] cluster as cofactor.

The enzyme catalyses hydrogen sulfide + 3 NADP(+) + 3 H2O = sulfite + 3 NADPH + 4 H(+). It functions in the pathway sulfur metabolism; hydrogen sulfide biosynthesis; hydrogen sulfide from sulfite (NADPH route): step 1/1. In terms of biological role, component of the sulfite reductase complex that catalyzes the 6-electron reduction of sulfite to sulfide. This is one of several activities required for the biosynthesis of L-cysteine from sulfate. The protein is Sulfite reductase [NADPH] hemoprotein beta-component of Buchnera aphidicola subsp. Acyrthosiphon pisum (strain 5A).